A 285-amino-acid polypeptide reads, in one-letter code: 1,4-dihydroxy-2-naphthoyl-CoA synthase (285 aa).

Residues Arg-45, 84 to 88 (AGGDQ), Tyr-97, 129 to 133 (YSIGG), Thr-155, Ser-161, Tyr-258, and Lys-273 each bind substrate. 154 to 156 (QTG) serves as a coordination point for hydrogencarbonate.

Belongs to the enoyl-CoA hydratase/isomerase family. MenB subfamily. Homohexamer. Requires hydrogencarbonate as cofactor.

The catalysed reaction is 2-succinylbenzoyl-CoA + H(+) = 1,4-dihydroxy-2-naphthoyl-CoA + H2O. It participates in quinol/quinone metabolism; 1,4-dihydroxy-2-naphthoate biosynthesis; 1,4-dihydroxy-2-naphthoate from chorismate: step 6/7. Its pathway is quinol/quinone metabolism; menaquinone biosynthesis. Functionally, converts o-succinylbenzoyl-CoA (OSB-CoA) to 1,4-dihydroxy-2-naphthoyl-CoA (DHNA-CoA). This chain is 1,4-dihydroxy-2-naphthoyl-CoA synthase, found in Salmonella typhimurium (strain LT2 / SGSC1412 / ATCC 700720).